Consider the following 420-residue polypeptide: Protein Rv2184c (420 aa).

The protein belongs to the arsA ATPase family.

This Mycobacterium tuberculosis (strain ATCC 25618 / H37Rv) protein is Protein Rv2184c.